The following is a 548-amino-acid chain: Phenylalanine--tRNA ligase beta subunit (548 aa).

The B5 domain maps to 271–346 (LSEAAAKLDP…ISIGYEALGP (76 aa)). Mg(2+) is bound by residues Asp324, Asp330, Glu333, and Asp334.

This sequence belongs to the phenylalanyl-tRNA synthetase beta subunit family. Type 2 subfamily. As to quaternary structure, tetramer of two alpha and two beta subunits. Mg(2+) serves as cofactor.

The protein localises to the cytoplasm. The enzyme catalyses tRNA(Phe) + L-phenylalanine + ATP = L-phenylalanyl-tRNA(Phe) + AMP + diphosphate + H(+). In Aeropyrum pernix (strain ATCC 700893 / DSM 11879 / JCM 9820 / NBRC 100138 / K1), this protein is Phenylalanine--tRNA ligase beta subunit.